The following is a 532-amino-acid chain: Probable cytochrome P450 524A1 (532 aa).

The chain crosses the membrane as a helical span at residues 8–28 (FIIFILLAALAVFVSEATSKV). Position 478 (Cys-478) interacts with heme.

It belongs to the cytochrome P450 family. Heme serves as cofactor.

The protein resides in the membrane. This is Probable cytochrome P450 524A1 (cyp524A1) from Dictyostelium discoideum (Social amoeba).